We begin with the raw amino-acid sequence, 323 residues long: Small ribosomal subunit protein mS35 (323 aa).

Residues 31–59 form a disordered region; that stretch reads PVPTPSLPERTPGNERPPRRKALPPRTEK. Residues 257–321 are a coiled coil; that stretch reads SSERNILETL…YKESVKRLLN (65 aa).

This sequence belongs to the mitochondrion-specific ribosomal protein mS35 family. In terms of assembly, component of the mitochondrial small ribosomal subunit (mt-SSU). Mature mammalian 55S mitochondrial ribosomes consist of a small (28S) and a large (39S) subunit. The 28S small subunit contains a 12S ribosomal RNA (12S mt-rRNA) and 30 different proteins. The 39S large subunit contains a 16S rRNA (16S mt-rRNA), a copy of mitochondrial valine transfer RNA (mt-tRNA(Val)), which plays an integral structural role, and 52 different proteins.

The protein resides in the mitochondrion. This is Small ribosomal subunit protein mS35 from Homo sapiens (Human).